Here is a 581-residue protein sequence, read N- to C-terminus: Penicillin-binding protein activator LpoA (581 aa).

The signal sequence occupies residues 1-26 (MLSILMQGLRLKKCFLPILVMFFLAG). Residue Cys-27 is the site of N-palmitoyl cysteine attachment. Residue Cys-27 is the site of S-diacylglycerol cysteine attachment.

The protein belongs to the LpoA family. In terms of assembly, interacts with PBP1a.

The protein localises to the cell outer membrane. Its function is as follows. Regulator of peptidoglycan synthesis that is essential for the function of penicillin-binding protein 1A (PBP1a). This chain is Penicillin-binding protein activator LpoA, found in Histophilus somni (strain 129Pt) (Haemophilus somnus).